Consider the following 111-residue polypeptide: uncharacterized protein (111 aa).

G2 carries N-myristoyl glycine; by host lipidation.

This is an uncharacterized protein from Acanthamoeba polyphaga mimivirus (APMV).